A 1791-amino-acid polypeptide reads, in one-letter code: Protein TIC 214 (1791 aa).

6 helical membrane-spanning segments follow: residues 19 to 39 (IINSVVVVGLYYGFLTTFSIG), 68 to 88 (FIAGQLMMFISIYYAPLHLAL), 91 to 111 (PHTITVLALPYLLFHFFWNNH), 133 to 153 (VFLNNLIFQLFNHFILPSSML), 176 to 196 (VGWLIGHILFMKWVGLVLVWI), and 227 to 247 (IFSILLFITCVYYLGRIPSPI). The interval 1492-1511 (ASQVELESDKENKKNPESAL) is disordered. Residues 1498–1511 (ESDKENKKNPESAL) show a composition bias toward basic and acidic residues.

It belongs to the TIC214 family. Part of the Tic complex.

The protein resides in the plastid. It localises to the chloroplast inner membrane. Involved in protein precursor import into chloroplasts. May be part of an intermediate translocation complex acting as a protein-conducting channel at the inner envelope. This Barbarea verna (Land cress) protein is Protein TIC 214.